The following is a 158-amino-acid chain: MSGAVCPGSFDPVTLGHVDIFERAAAQFDEVVVAVLVNPNKKGMFTLDERMEMIAESCAHLPNLRVESGQGLVVDFVRARGYSAIVKGLRSSTDFEYELQMAQMNKHVAGVDTFFIASAPSYSFVSSSLAKEVATLGGDVSALLPDAVNVRLQAKLRG.

Serine 9 provides a ligand contact to substrate. ATP-binding positions include 9–10 (SF) and histidine 17. Residues lysine 41, valine 73, and lysine 87 each contribute to the substrate site. ATP is bound by residues 88–90 (GLR), glutamate 98, and 122–128 (YSFVSSS).

Belongs to the bacterial CoaD family. In terms of assembly, homohexamer. Mg(2+) is required as a cofactor.

The protein resides in the cytoplasm. The enzyme catalyses (R)-4'-phosphopantetheine + ATP + H(+) = 3'-dephospho-CoA + diphosphate. It participates in cofactor biosynthesis; coenzyme A biosynthesis; CoA from (R)-pantothenate: step 4/5. In terms of biological role, reversibly transfers an adenylyl group from ATP to 4'-phosphopantetheine, yielding dephospho-CoA (dPCoA) and pyrophosphate. The protein is Phosphopantetheine adenylyltransferase of Mycobacterium sp. (strain JLS).